We begin with the raw amino-acid sequence, 1426 residues long: Ferlin 2 (1426 aa).

C2 domains lie at 1–111 (MGKT…QIRK), 161–279 (RKAV…PRWF), 512–638 (EKSK…ESPT), 1031–1154 (SEDR…QKSM), and 1189–1318 (KAGE…TLNS). The tract at residues 1357 to 1377 (SKPVGLGREPPNRDPRLTTPQ) is disordered. Residues 1366–1377 (PPNRDPRLTTPQ) show a composition bias toward basic and acidic residues. Residues 1404 to 1424 (VAAVVFLSIWIFVVAFLYPSL) form a helical membrane-spanning segment.

It belongs to the ferlin family.

The protein resides in the membrane. It localises to the inner membrane complex. Its subcellular location is the cytoplasmic vesicle. It is found in the secretory vesicle. The protein localises to the rhoptry. Regulates rhoptry secretion. Required for completing the lytic cycle. Required for host cell invasion. Not required for microneme secretion and conoid extrusion. The protein is Ferlin 2 of Toxoplasma gondii.